Reading from the N-terminus, the 249-residue chain is Flavin-dependent thymidylate synthase (249 aa).

Residues Val8–Ser225 form the ThyX domain. Residues Ser62, Arg86–Arg88, and Gln94 each bind FAD. Residues Gln83 to Arg86, Gln94 to Arg98, and Arg164 contribute to the dUMP site. The ThyX motif signature appears at Arg86–Ser96. FAD-binding positions include Asn180–Arg182 and Asn186. Arg191 contacts dUMP. Residue Arg191 is the Involved in ionization of N3 of dUMP, leading to its activation of the active site.

This sequence belongs to the thymidylate synthase ThyX family. As to quaternary structure, homotetramer. It depends on FAD as a cofactor.

The catalysed reaction is dUMP + (6R)-5,10-methylene-5,6,7,8-tetrahydrofolate + NADPH + H(+) = dTMP + (6S)-5,6,7,8-tetrahydrofolate + NADP(+). The protein operates within pyrimidine metabolism; dTTP biosynthesis. In terms of biological role, catalyzes the reductive methylation of 2'-deoxyuridine-5'-monophosphate (dUMP) to 2'-deoxythymidine-5'-monophosphate (dTMP) while utilizing 5,10-methylenetetrahydrofolate (mTHF) as the methyl donor, and NADPH and FADH(2) as the reductant. This is Flavin-dependent thymidylate synthase from Clostridium tetani (strain Massachusetts / E88).